The chain runs to 271 residues: MMIHGFQSSHQDFSFGPWKLTASKTHIMKSADVEKLADELHMPSLPEMMFGDNVLRIQHGSGFGIEFNATDALRCVNNYQGMLKVACAEEWQESRTEGEHSKEVIKPYDWTYTTDYKGTLLGESLKLKVVPTTDHIDTEKLKAREQIKFFEEVLLFEDELHDHGVSSLSVKIRVMPSSFFLLLRFFLRIDGVLIRMNDTRLYHEADKTYMLREYTSRESKIANLMHVPPSLFTEPNEISQYLPIKEAVCEKLVFPERIDPNPVDSESAPSE.

Lysine 106 bears the N6-acetyllysine mark. The interval 173-271 is interaction with PPP2CA; that stretch reads RVMPSSFFLL…PVDSESAPSE (99 aa). Phosphoserine occurs at positions 265 and 270.

Belongs to the TIP41 family. Interacts with PPP2CA. Interacts with PPP2CB, PPP4C and PPP6C. Interacts with IGBP1; the interaction is dependent on PPP2CA. Associates with a protein phosphatase 2A PP2A(C):IGBP1 complex. Interacts with PPP4C and PPP4R2.

It is found in the cytoplasm. In terms of biological role, may be a allosteric regulator of serine/threonine-protein phosphatase 2A (PP2A). Inhibits catalytic activity of the PP2A(D) core complex in vitro. The PP2A(C):TIPRL complex does not show phosphatase activity. Acts as a negative regulator of serine/threonine-protein phosphatase 4 probably by inhibiting the formation of the active PPP4C:PPP4R2 complex; the function is proposed to implicate it in DNA damage response by promoting H2AX phosphorylated on Ser-140 (gamma-H2AX). May play a role in the regulation of ATM/ATR signaling pathway controlling DNA replication and repair. The polypeptide is TIP41-like protein (Tiprl) (Rattus norvegicus (Rat)).